A 277-amino-acid polypeptide reads, in one-letter code: Inorganic pyrophosphatase (277 aa).

Arg-80 serves as a coordination point for diphosphate. The Mg(2+) site is built by Asp-117, Asp-122, and Asp-154.

Belongs to the PPase family. Requires Mg(2+) as cofactor.

Its subcellular location is the cytoplasm. It catalyses the reaction diphosphate + H2O = 2 phosphate + H(+). Involved in osmoadaptation. The chain is Inorganic pyrophosphatase (IPP1) from Encephalitozoon cuniculi (strain GB-M1) (Microsporidian parasite).